The primary structure comprises 460 residues: Muscarinic acetylcholine receptor M1 (460 aa).

Over 1–22 (MNTSAPPAVSPNITVLAPGKGP) the chain is Extracellular. Residues Asn2 and Asn12 are each glycosylated (N-linked (GlcNAc...) asparagine). A helical transmembrane segment spans residues 23 to 48 (WQVAFIGITTGLLSLATVTGNLLVLI). Topologically, residues 49–62 (SFKVNTELKTVNNY) are cytoplasmic. A helical membrane pass occupies residues 63–84 (FLLSLACADLIIGTFSMNLYTT). Residues 85–95 (YLLMGHWALGT) lie on the Extracellular side of the membrane. A helical transmembrane segment spans residues 96 to 121 (LACDLWLALDYVASNASVMNLLLISF). The cysteines at positions 98 and 178 are disulfide-linked. Residues 122 to 142 (DRYFSVTRPLSYRAKRTPRRA) are Cytoplasmic-facing. The chain crosses the membrane as a helical span at residues 143–164 (ALMIGLAWLVSFVLWAPAILFW). The Extracellular segment spans residues 165-185 (QYLVGERTVLAGQCYIQFLSQ). A helical membrane pass occupies residues 186 to 209 (PIITFGTAMAAFYLPVTVMCTLYW). Over 210–366 (RIYRETESRA…LVKEKKAART (157 aa)) the chain is Cytoplasmic. Disordered regions lie at residues 225–256 (LQGSETPGKGGGSSSSSERSQPGAEGSPGTPP), 274–297 (WKEEEEEDEGSMESLTSSEGEEPG), and 310–351 (EAQA…QLAK). A Phosphothreonine modification is found at Thr230. Residues 238 to 247 (SSSSERSQPG) are compositionally biased toward low complexity. Residues 328-343 (RPTKKGRDRAGKGQKP) show a composition bias toward basic residues. Residues 367–390 (LSAILLAFILTWTPYNIMVLVSTF) form a helical membrane-spanning segment. The Extracellular segment spans residues 391–397 (CKDCVPE). Residues 398-420 (TLWELGYWLCYVNSTINPMCYAL) form a helical membrane-spanning segment. Residues 421–460 (CNKAFRDTFRLLLLCRWDKRRWRKIPKRPGSVHRTPSRQC) are Cytoplasmic-facing. Thr428 carries the post-translational modification Phosphothreonine. Ser451 is subject to Phosphoserine. Thr455 is modified (phosphothreonine). A Phosphoserine modification is found at Ser457.

Belongs to the G-protein coupled receptor 1 family. Muscarinic acetylcholine receptor subfamily. CHRM1 sub-subfamily. Interacts with GPRASP2. Interacts with TMEM147.

It is found in the cell membrane. It localises to the postsynaptic cell membrane. In terms of biological role, the muscarinic acetylcholine receptor mediates various cellular responses, including inhibition of adenylate cyclase, breakdown of phosphoinositides and modulation of potassium channels through the action of G proteins. Primary transducing effect is Pi turnover. The protein is Muscarinic acetylcholine receptor M1 (CHRM1) of Pongo abelii (Sumatran orangutan).